Here is a 1288-residue protein sequence, read N- to C-terminus: (E3-independent) E2 ubiquitin-conjugating enzyme UBE2O (1288 aa).

Composition is skewed to low complexity over residues 1–26 (MADP…APAA) and 34–47 (ATDS…DSGP). 2 disordered regions span residues 1 to 51 (MADP…EAGS) and 80 to 109 (EDSD…EGRA). Ser-45, Ser-82, Ser-84, and Ser-394 each carry phosphoserine. Disordered regions lie at residues 396–529 (TPDT…KNKV) and 711–743 (ESDY…NGLV). The span at 401-418 (CPRDHSMEDPDKKGEARA) shows a compositional bias: basic and acidic residues. At Ser-436 the chain carries Phosphoserine. A compositionally biased stretch (acidic residues) spans 440–450 (MQDEGSEELQE). Residues 462–472 (EGGDDGLHSAE) are compositionally biased toward basic and acidic residues. Acidic residues predominate over residues 473 to 485 (QDADDEAADDTDD). Phosphothreonine is present on residues Thr-483 and Thr-486. The segment covering 486–502 (TSSVTSSASSTTSSQSG) has biased composition (low complexity). The residue at position 510 (Ser-510) is a Phosphoserine. Over residues 517 to 528 (NLKRKHKRKKNK) the composition is skewed to basic residues. Residues 717 to 726 (VEGSSSGASS) are compositionally biased toward low complexity. Acidic residues predominate over residues 727 to 737 (DEWEDDSDSWE). Residues 809-879 (RELKEAIKIL…IAEEEKMEAV (71 aa)) are a coiled coil. Ser-833 is modified (phosphoserine). Thr-835 carries the phosphothreonine modification. Position 836 is a phosphoserine (Ser-836). Residues 872–890 (EEEKMEAVPDTERKEEKPE) show a composition bias toward basic and acidic residues. Positions 872-899 (EEEKMEAVPDTERKEEKPEVQSPVKAEW) are disordered. Ser-893 is subject to Phosphoserine. The UBC core domain occupies 950-1110 (KFFSTVRKEM…ALIRVVQSMT (161 aa)). Cys-1037 acts as the Glycyl thioester intermediate in catalysis. Positions 1158 to 1247 (GALKDSSSLE…RSFLPEKSGY (90 aa)) are disordered.

Belongs to the ubiquitin-conjugating enzyme family. Interacts with CPNE1 (via VWFA domain) and CPNE4 (via VWFA domain). Interacts with UBR2. Post-translationally, phosphorylated. Phosphorylation affects subcellular location. Ubiquitinated: autoubiquitinates, possibly affecting its subcellular location. Highly expressed in reticulocytes.

Its subcellular location is the cytoplasm. The protein localises to the nucleus. The catalysed reaction is S-ubiquitinyl-[E1 ubiquitin-activating enzyme]-L-cysteine + [acceptor protein]-L-lysine = [E1 ubiquitin-activating enzyme]-L-cysteine + N(6)-monoubiquitinyl-[acceptor protein]-L-lysine.. It participates in protein modification; protein ubiquitination. Inhibited by inorganic arsenite such as phenylarsenoxides. E2/E3 hybrid ubiquitin-protein ligase that displays both E2 and E3 ligase activities and mediates monoubiquitination of target proteins. Negatively regulates TRAF6-mediated NF-kappa-B activation independently of its E2 activity. Acts as a positive regulator of BMP7 signaling by mediating monoubiquitination of SMAD6, thereby regulating adipogenesis. Mediates monoubiquitination at different sites of the nuclear localization signal (NLS) of BAP1, leading to cytoplasmic retention of BAP1. Also able to monoubiquitinate the NLS of other chromatin-associated proteins, such as INO80 and CXXC1, affecting their subcellular location. Acts as a regulator of retrograde transport by assisting the TRIM27:MAGEL2 E3 ubiquitin ligase complex to mediate 'Lys-63'-linked ubiquitination of WASHC1, leading to promote endosomal F-actin assembly. This Mus musculus (Mouse) protein is (E3-independent) E2 ubiquitin-conjugating enzyme UBE2O (Ube2o).